Consider the following 599-residue polypeptide: Protein linkin (599 aa).

The first 19 residues, 1-19 (MKKILPIIWLINLVSGSLS), serve as a signal peptide directing secretion. The Extracellular portion of the chain corresponds to 20–553 (LEKKAPDLLG…SRLYVTPSAL (534 aa)). Asn50, Asn117, Asn163, Asn361, and Asn378 each carry an N-linked (GlcNAc...) asparagine glycan. A helical membrane pass occupies residues 554-574 (IVQSLAVIALVCCMLLMVVVF). At 575-599 (LHYREKKEDRYERQQQSHRFHFDAM) the chain is on the cytoplasmic side.

The protein belongs to the TIP family. As to expression, expressed in all somatic gonadal cells including distal tip cells, anchor cell, uterine precursor cells and spermatheca precursor cells of the hermaphrodite. Also expressed in the pharynx, pharyngeal-intestinal valve, intestine, excretory cell and canal, seam cells, a subset of hypodermal cells, vulval precursor cells of the hermaphrodite and hook precursor cells in the male.

The protein resides in the apical cell membrane. It is found in the lateral cell membrane. Probable cell adhesion protein involved in gonadal cell migration. The polypeptide is Protein linkin (Caenorhabditis elegans).